The primary structure comprises 186 residues: uncharacterized protein (186 aa).

The N-terminal stretch at 1 to 18 (MNKFLFAAALIVSGLLVG) is a signal peptide. A lipid anchor (N-palmitoyl cysteine) is attached at Cys19. A lipid anchor (S-diacylglycerol cysteine) is attached at Cys19.

It is found in the cell membrane. This is an uncharacterized protein from Escherichia coli (strain K12).